The primary structure comprises 237 residues: UPF0173 metal-dependent hydrolase HQ_3368A (237 aa).

Belongs to the UPF0173 family.

In Haloquadratum walsbyi (strain DSM 16790 / HBSQ001), this protein is UPF0173 metal-dependent hydrolase HQ_3368A.